The primary structure comprises 397 residues: Chorismate synthase (397 aa).

NADP(+) contacts are provided by R40 and R46. Residues 129–131 (RAS), 257–258 (QA), G302, 317–321 (KPIAT), and R343 each bind FMN.

Belongs to the chorismate synthase family. As to quaternary structure, homotetramer. FMNH2 serves as cofactor.

The enzyme catalyses 5-O-(1-carboxyvinyl)-3-phosphoshikimate = chorismate + phosphate. The protein operates within metabolic intermediate biosynthesis; chorismate biosynthesis; chorismate from D-erythrose 4-phosphate and phosphoenolpyruvate: step 7/7. Its function is as follows. Catalyzes the anti-1,4-elimination of the C-3 phosphate and the C-6 proR hydrogen from 5-enolpyruvylshikimate-3-phosphate (EPSP) to yield chorismate, which is the branch point compound that serves as the starting substrate for the three terminal pathways of aromatic amino acid biosynthesis. This reaction introduces a second double bond into the aromatic ring system. The sequence is that of Chorismate synthase from Chlorobium phaeobacteroides (strain BS1).